A 480-amino-acid chain; its full sequence is Lysostaphin (480 aa).

Residues 1-23 form the signal peptide; that stretch reads MKKTKNNYYTTPLAIGLSTFALA. Residues 24–234 constitute a propeptide that is removed on maturation; the sequence is SIVYGGIQNE…ALVQNRTALR (211 aa). A run of 13 repeats spans residues 49–61, 62–74, 75–87, 88–100, 101–113, 114–126, 127–139, 140–152, 153–165, 166–178, 179–191, 192–204, and 205–217. A 14 X 13 AA tandem repeats of A-E-V-E-T-S-K-[AP]-P-V-E-N-T region spans residues 49–230; the sequence is AEVETSKPPV…ETSKALVQNR (182 aa). Positions 51-219 are disordered; it reads VETSKPPVEN…SKAPVENTAE (169 aa). A 14; approximate repeat occupies 218–230; sequence AEVETSKALVQNR. The Zn(2+) site is built by histidine 266 and aspartate 270. Histidine 347 is an active-site residue. Position 349 (histidine 349) interacts with Zn(2+). An SH3b domain is found at 400 to 468; sequence SESASFTPNT…YLPVRTWNKS (69 aa).

It belongs to the peptidase M23B family. As to quaternary structure, monomer. The cofactor is Zn(2+).

The protein resides in the secreted. The catalysed reaction is Hydrolysis of the -Gly-|-Gly- bond in the pentaglycine inter-peptide link joining staphylococcal cell wall peptidoglycans.. Its function is as follows. Lyses staphylococcal cells by hydrolyzing the polyglycine interpeptide bridges of the peptidoglycan. This is Lysostaphin (lss) from Staphylococcus staphylolyticus.